Reading from the N-terminus, the 360-residue chain is Zinc finger protein ztf-2 (360 aa).

A disordered region spans residues 19–41; that stretch reads LSSPEKEHRRKRRRGEVANPSNT. 3 C2H2-type zinc fingers span residues 87–109, 115–138, and 180–203; these read RTCS…KRVH, FKCR…AKTH, and YRCQ…SHLH. The segment covering 248 to 260 has biased composition (low complexity); sequence PLSPCRSESSSDS. Residues 248–272 are disordered; the sequence is PLSPCRSESSSDSGIQTDPEEEASI.

In terms of tissue distribution, expressed in pharyngeal epithelium/arcade, which connects the pharynx to the mouth.

Functionally, transcription factor. Represses gene expression, probably via binding to DNA consensus sequence 5'-[AT][CT]TTCC[AC][AG]-3' in promoter regions. May play a role in pharynx morphogenesis. The sequence is that of Zinc finger protein ztf-2 from Caenorhabditis elegans.